The chain runs to 323 residues: Germacrene A synthase (323 aa).

Residues Asp82, Asp86, Asn222, Ser226, and Glu230 each coordinate Mg(2+). A DDXXD motif motif is present at residues 82 to 86 (DDQCD).

This sequence belongs to the terpene synthase family. Requires Mg(2+) as cofactor.

The catalysed reaction is (2E,6E)-farnesyl diphosphate = 5-epi-alpha-selinene + diphosphate. Functionally, catalyzes the cyclization of farnesyl diphosphate (FPP) to the sesquiterpene germacrene A. This chain is Germacrene A synthase, found in Nostoc punctiforme (strain ATCC 29133 / PCC 73102).